The following is a 388-amino-acid chain: LL-diaminopimelate aminotransferase (388 aa).

Residues Tyr13, Gly38, Lys102, Tyr126, and Asn176 each coordinate substrate. Pyridoxal 5'-phosphate is bound by residues 101–102 (SK), Tyr126, Asn176, Tyr207, and 235–237 (SLS). N6-(pyridoxal phosphate)lysine is present on Lys238. Arg246 is a pyridoxal 5'-phosphate binding site. Residue Arg364 coordinates substrate.

The protein belongs to the class-I pyridoxal-phosphate-dependent aminotransferase family. LL-diaminopimelate aminotransferase subfamily. In terms of assembly, homodimer. Pyridoxal 5'-phosphate is required as a cofactor.

It carries out the reaction (2S,6S)-2,6-diaminopimelate + 2-oxoglutarate = (S)-2,3,4,5-tetrahydrodipicolinate + L-glutamate + H2O + H(+). It functions in the pathway amino-acid biosynthesis; L-lysine biosynthesis via DAP pathway; LL-2,6-diaminopimelate from (S)-tetrahydrodipicolinate (aminotransferase route): step 1/1. Functionally, involved in the synthesis of meso-diaminopimelate (m-DAP or DL-DAP), required for both lysine and peptidoglycan biosynthesis. Catalyzes the direct conversion of tetrahydrodipicolinate to LL-diaminopimelate. The sequence is that of LL-diaminopimelate aminotransferase from Dehalococcoides mccartyi (strain ATCC BAA-2100 / JCM 16839 / KCTC 5957 / BAV1).